The sequence spans 171 residues: ATP synthase subunit b (171 aa).

The chain crosses the membrane as a helical span at residues 2–22; it reads FVVKMVLGFLILLSPLCATGL.

This sequence belongs to the ATPase B chain family. As to quaternary structure, F-type ATPases have 2 components, F(1) - the catalytic core - and F(0) - the membrane proton channel. F(1) has five subunits: alpha(3), beta(3), gamma(1), delta(1), epsilon(1). F(0) has three main subunits: a(1), b(2) and c(10-14). The alpha and beta chains form an alternating ring which encloses part of the gamma chain. F(1) is attached to F(0) by a central stalk formed by the gamma and epsilon chains, while a peripheral stalk is formed by the delta and b chains.

The protein resides in the cell inner membrane. In terms of biological role, f(1)F(0) ATP synthase produces ATP from ADP in the presence of a proton or sodium gradient. F-type ATPases consist of two structural domains, F(1) containing the extramembraneous catalytic core and F(0) containing the membrane proton channel, linked together by a central stalk and a peripheral stalk. During catalysis, ATP synthesis in the catalytic domain of F(1) is coupled via a rotary mechanism of the central stalk subunits to proton translocation. Its function is as follows. Component of the F(0) channel, it forms part of the peripheral stalk, linking F(1) to F(0). In Helicobacter pylori (strain J99 / ATCC 700824) (Campylobacter pylori J99), this protein is ATP synthase subunit b.